A 542-amino-acid polypeptide reads, in one-letter code: Protein lin-9 homolog (542 aa).

Position 2 is an N-acetylalanine (A2). Residues 2 to 296 (AELDQLPDES…QKQRPSRFFM (295 aa)) form a sufficient for interaction with RB1 region. Residue K21 forms a Glycyl lysine isopeptide (Lys-Gly) (interchain with G-Cter in SUMO2) linkage. Phosphoserine occurs at positions 65 and 95. Phosphothreonine occurs at positions 96 and 304. Phosphoserine is present on residues S309 and S321. Residues 354–413 (MIKKEHIKKLREMNTEAEKLKSYSMPISIEFQRRYATIVLELEQLNKDLNKVLHKVQQYC) are a coiled coil.

This sequence belongs to the lin-9 family. As to quaternary structure, component of the DREAM complex (also named LINC complex) at least composed of E2F4, E2F5, LIN9, LIN37, LIN52, LIN54, MYBL1, MYBL2, RBL1, RBL2, RBBP4, TFDP1 and TFDP2. The complex exists in quiescent cells where it represses cell cycle-dependent genes. It dissociates in S phase when LIN9, LIN37, LIN52 and LIN54 form a subcomplex that binds to MYBL2. Interacts with RB1. As to expression, expressed in thymus and testis.

The protein localises to the nucleus. It is found in the nucleoplasm. In terms of biological role, acts as a tumor suppressor. Inhibits DNA synthesis. Its ability to inhibit oncogenic transformation is mediated through its association with RB1. Plays a role in the expression of genes required for the G1/S transition. The sequence is that of Protein lin-9 homolog (LIN9) from Homo sapiens (Human).